Reading from the N-terminus, the 446-residue chain is Probable tRNA modification GTPase MnmE (446 aa).

Positions 28, 87, and 126 each coordinate (6S)-5-formyl-5,6,7,8-tetrahydrofolate. The region spanning 218 to 373 is the TrmE-type G domain; it reads GIQVALLGPA…LKQLIWQQAT (156 aa). Position 228 (Asn-228) interacts with K(+). Residues 228-233, 247-253, and 272-275 each bind GTP; these read NAGKST, TPIAGTT, and DTAG. Ser-232 is a binding site for Mg(2+). Positions 247, 249, and 252 each coordinate K(+). Thr-253 lines the Mg(2+) pocket. Residue Lys-446 participates in (6S)-5-formyl-5,6,7,8-tetrahydrofolate binding.

It belongs to the TRAFAC class TrmE-Era-EngA-EngB-Septin-like GTPase superfamily. TrmE GTPase family. K(+) is required as a cofactor.

Its subcellular location is the plastid. It localises to the chloroplast. In terms of biological role, exhibits a very high intrinsic GTPase hydrolysis rate. Involved in the addition of a carboxymethylaminomethyl (cmnm) group at the wobble position (U34) of certain tRNAs, forming tRNA-cmnm(5)s(2)U34. The polypeptide is Probable tRNA modification GTPase MnmE (Cyanidioschyzon merolae (strain NIES-3377 / 10D) (Unicellular red alga)).